The sequence spans 587 residues: Laccase abr2 (587 aa).

Positions methionine 1–alanine 17 are cleaved as a signal peptide. 2 Plastocyanin-like domains span residues isoleucine 41–arginine 137 and leucine 168–glycine 350. A glycan (N-linked (GlcNAc...) asparagine) is linked at asparagine 71. The Cu cation site is built by histidine 75, histidine 77, histidine 119, and histidine 121. 4 N-linked (GlcNAc...) asparagine glycosylation sites follow: asparagine 228, asparagine 383, asparagine 420, and asparagine 462. Positions proline 397–proline 577 constitute a Plastocyanin-like 3 domain. Cu cation is bound at residue histidine 487. N-linked (GlcNAc...) asparagine glycosylation is present at asparagine 504.

This sequence belongs to the multicopper oxidase family.

Its subcellular location is the cell surface. It participates in pigment biosynthesis; melanin biosynthesis. Its function is as follows. Laccase; part of the gene cluster that mediates the biosynthesis of dihydroxynaphthalene (DHN)-melanin, a bluish-green pigment and a structural component of the conidial wall. The first step of the pathway is the production of the heptaketide naphtopyrone YWA1 by the polyketide synthase alb1 though condensation of acetyl-CoA with malonyl-CoA. The naphtopyrone YWA1 is then converted to the pentaketide 1,3,6,8-tetrahydroxynaphthalene (1,3,6,8-THN) by the heptaketide hydrolyase ayg1 though chain-length shortening. 1,3,6,8-THN is substrate of the hydroxynaphthalene reductase arp2 to yield scytalone. The scytalone dehydratase arp1 then reduces scytalone to 1,3,8-THN. 1,3,8-THN is also substrate of the hydroxynaphthalene reductase arp2 to yield vermelone. Vermelone is further converted by the multicopper oxidase abr1 to 1,8-DHN. Finally the laccase abr2 transforms 1,8-DHN to DHN-melanin. DHN-melanin biosynthesis appears to be initiated in endosomes where early enzymes (abl1, ayg1, arp1 and arp2) localize, with exocytosis leading to melanin deposition on the cell surface where late enzymes (abr1 and abr2) localize. DHN-melanin is an important structural component of the outer cell wall and is required for the presence of conidial surface hydrophobins. DHN-melanin also plays a crucial role in fungal virulence, including a protective role against the host's immune defenses. DHN-melanin also protects conidia against amoeba predation. The protein is Laccase abr2 of Aspergillus fumigatus (strain ATCC MYA-4609 / CBS 101355 / FGSC A1100 / Af293) (Neosartorya fumigata).